A 1032-amino-acid polypeptide reads, in one-letter code: Error-prone DNA polymerase (1032 aa).

The protein belongs to the DNA polymerase type-C family. DnaE2 subfamily.

Its subcellular location is the cytoplasm. It carries out the reaction DNA(n) + a 2'-deoxyribonucleoside 5'-triphosphate = DNA(n+1) + diphosphate. Functionally, DNA polymerase involved in damage-induced mutagenesis and translesion synthesis (TLS). It is not the major replicative DNA polymerase. In Hahella chejuensis (strain KCTC 2396), this protein is Error-prone DNA polymerase.